We begin with the raw amino-acid sequence, 303 residues long: MADKSKFIEYIDEALEKSKETALSHLFFTYQGIPYPITMCTSETFQALDTFEARHDDIVLASYPKCGSNWILHIVSELIYAVSKKKYKYPEFPVLECGDSEKYQRMKGFPSPRILATHLHYDKLPGSIFENKAKILVIFRNPKDTAVSFLHFHNDVPDIPSYGSWDEFFRQFMKGQVSWGRYFDFAINWNKHLDGDNVKFILYEDLKENLAAGIKQIAEFLGFFLTGEQIQTISVQSTFQAMRAKSQDTHGAVGPFLFRKGEVGDWKNLFSEIQNQEMDEKFKECLAGTSLGAKLKYESYCQG.

Lys65–Trp70 provides a ligand contact to 3'-phosphoadenylyl sulfate. His118 functions as the Proton acceptor in the catalytic mechanism. Residues Arg140, Ser148, Tyr203, Ser237–Met242, and Arg259–Gly261 contribute to the 3'-phosphoadenylyl sulfate site.

The protein belongs to the sulfotransferase 1 family. As to expression, specifically expressed in kidney and testis.

The protein resides in the cytoplasm. Its subcellular location is the cytosol. It catalyses the reaction thyroxine + 3'-phosphoadenylyl sulfate = thyroxine sulfate + adenosine 3',5'-bisphosphate + H(+). Functionally, sulfotransferase that utilizes 3'-phospho-5'-adenylyl sulfate (PAPS) as sulfonate donor to catalyze the sulfate conjugation of thyroxine. Involved in the metabolism of thyroxine. In Homo sapiens (Human), this protein is Sulfotransferase 6B1 (SULT6B1).